A 121-amino-acid chain; its full sequence is Large ribosomal subunit protein bL12 (121 aa).

Belongs to the bacterial ribosomal protein bL12 family. Homodimer. Part of the ribosomal stalk of the 50S ribosomal subunit. Forms a multimeric L10(L12)X complex, where L10 forms an elongated spine to which 2 to 4 L12 dimers bind in a sequential fashion. Binds GTP-bound translation factors.

Functionally, forms part of the ribosomal stalk which helps the ribosome interact with GTP-bound translation factors. Is thus essential for accurate translation. The protein is Large ribosomal subunit protein bL12 of Xanthomonas axonopodis pv. citri (strain 306).